Here is a 194-residue protein sequence, read N- to C-terminus: Ribosome maturation factor RimM (194 aa).

One can recognise a PRC barrel domain in the interval 113–194; it reads DGEYYWIDLI…RIVADWGLDY (82 aa).

This sequence belongs to the RimM family. In terms of assembly, binds ribosomal protein uS19.

It is found in the cytoplasm. In terms of biological role, an accessory protein needed during the final step in the assembly of 30S ribosomal subunit, possibly for assembly of the head region. Essential for efficient processing of 16S rRNA. May be needed both before and after RbfA during the maturation of 16S rRNA. It has affinity for free ribosomal 30S subunits but not for 70S ribosomes. The protein is Ribosome maturation factor RimM of Leptothrix cholodnii (strain ATCC 51168 / LMG 8142 / SP-6) (Leptothrix discophora (strain SP-6)).